The following is a 275-amino-acid chain: NH(3)-dependent NAD(+) synthetase (275 aa).

46–53 (GISGGQDS) is an ATP binding site. Aspartate 52 contacts Mg(2+). Deamido-NAD(+) is bound at residue arginine 140. An ATP-binding site is contributed by threonine 160. Glutamate 165 is a Mg(2+) binding site. Deamido-NAD(+) contacts are provided by lysine 173 and aspartate 180. Residues lysine 189 and threonine 211 each contribute to the ATP site. 260–261 (HK) lines the deamido-NAD(+) pocket.

Belongs to the NAD synthetase family. In terms of assembly, homodimer.

The enzyme catalyses deamido-NAD(+) + NH4(+) + ATP = AMP + diphosphate + NAD(+) + H(+). It functions in the pathway cofactor biosynthesis; NAD(+) biosynthesis; NAD(+) from deamido-NAD(+) (ammonia route): step 1/1. In terms of biological role, catalyzes the ATP-dependent amidation of deamido-NAD to form NAD. Uses ammonia as a nitrogen source. The sequence is that of NH(3)-dependent NAD(+) synthetase from Escherichia coli O45:K1 (strain S88 / ExPEC).